The primary structure comprises 183 residues: ATP-dependent protease subunit HslV (183 aa).

Residue Thr-13 is part of the active site. Na(+) contacts are provided by Gly-168, Cys-171, and Thr-174.

Belongs to the peptidase T1B family. HslV subfamily. A double ring-shaped homohexamer of HslV is capped on each side by a ring-shaped HslU homohexamer. The assembly of the HslU/HslV complex is dependent on binding of ATP.

It is found in the cytoplasm. The enzyme catalyses ATP-dependent cleavage of peptide bonds with broad specificity.. With respect to regulation, allosterically activated by HslU binding. Its function is as follows. Protease subunit of a proteasome-like degradation complex believed to be a general protein degrading machinery. This chain is ATP-dependent protease subunit HslV, found in Stenotrophomonas maltophilia (strain R551-3).